The sequence spans 151 residues: Globin CTT-X (151 aa).

The Globin domain maps to 6 to 150 (TLDAHEVEQV…AFSVIFEVLE (145 aa)). Residues histidine 64 and histidine 99 each coordinate heme b.

The protein belongs to the globin family. In terms of assembly, homodimer.

This chain is Globin CTT-X (CTT-10), found in Chironomus thummi thummi (Midge).